A 362-amino-acid polypeptide reads, in one-letter code: Aminomethyltransferase (362 aa).

Belongs to the GcvT family. As to quaternary structure, the glycine cleavage system is composed of four proteins: P, T, L and H.

The enzyme catalyses N(6)-[(R)-S(8)-aminomethyldihydrolipoyl]-L-lysyl-[protein] + (6S)-5,6,7,8-tetrahydrofolate = N(6)-[(R)-dihydrolipoyl]-L-lysyl-[protein] + (6R)-5,10-methylene-5,6,7,8-tetrahydrofolate + NH4(+). In terms of biological role, the glycine cleavage system catalyzes the degradation of glycine. This is Aminomethyltransferase from Listeria monocytogenes serotype 4b (strain CLIP80459).